The following is a 103-amino-acid chain: Large ribosomal subunit protein uL23 (103 aa).

This sequence belongs to the universal ribosomal protein uL23 family. Part of the 50S ribosomal subunit. Contacts protein L29, and trigger factor when it is bound to the ribosome.

Functionally, one of the early assembly proteins it binds 23S rRNA. One of the proteins that surrounds the polypeptide exit tunnel on the outside of the ribosome. Forms the main docking site for trigger factor binding to the ribosome. This is Large ribosomal subunit protein uL23 from Prochlorococcus marinus (strain NATL1A).